The following is a 79-amino-acid chain: Conotoxin ArMSGL-021 (79 aa).

The signal sequence occupies residues 1-20 (MSRLGIMVLTLLLLVFIVTS). The propeptide occupies 21–44 (HQDAGEKQATHRGAINFRWRRSLI). Disulfide bonds link Cys-52–Cys-64, Cys-56–Cys-73, and Cys-63–Cys-77. At Leu-78 the chain carries Leucine amide.

This sequence belongs to the conotoxin O3 superfamily. In terms of tissue distribution, expressed by the venom duct.

The protein resides in the secreted. This is Conotoxin ArMSGL-021 from Conus arenatus (Sand-dusted cone).